A 362-amino-acid polypeptide reads, in one-letter code: Probable secreted beta-glucosidase UTH1 (362 aa).

Residues 1 to 17 form the signal peptide; it reads MKLSALLALSASTAVLA.

It belongs to the SUN family.

It localises to the mitochondrion outer membrane. The protein localises to the secreted. The protein resides in the cell wall. Functionally, involved in aging, oxidative stress response, and in the regulation of mitochondrial biogenesis. Inactivation of UTH1 increases life span, leads to higher resistance to heat stress and to hydrogen peroxide, and increases sensitivity to the superoxide radical-generating drug paraquat and to copper. Also required for the selective autophagic degradation of mitochondria (mitophagy) in response to nitrogen starvation. May play a role in cell wall morphogenesis and septation. Involved in the remodeling of the cell wall during the various phases of yeast culture development and under various environmental conditions and plays a role in septation. Involved in cell sensitivity to boric acid. The sequence is that of Probable secreted beta-glucosidase UTH1 (UTH1) from Saccharomyces cerevisiae (strain YJM789) (Baker's yeast).